The primary structure comprises 504 residues: uncharacterized protein (504 aa).

To M.thermoautotrophicum MTH1137.

This is an uncharacterized protein from Methanocaldococcus jannaschii (strain ATCC 43067 / DSM 2661 / JAL-1 / JCM 10045 / NBRC 100440) (Methanococcus jannaschii).